The following is a 155-amino-acid chain: MIRIVRAELHGITVTGADLDYHGSITLDPEHCDLAGIRPLEFVDIWNKQSGARISTYVIFGEAGSKCCILNGAAARTCQRGDQVIICSSSYVEETALYDTAPMVLTFTPKNDVKDVLRYRVKETARRPFDFFIETLPRAENSDVDDGSAADRAIA.

Catalysis depends on serine 24, which acts as the Schiff-base intermediate with substrate; via pyruvic acid. Serine 24 is modified (pyruvic acid (Ser)). Substrate is bound at residue threonine 56. Catalysis depends on tyrosine 57, which acts as the Proton donor. Substrate is bound at residue 72–74 (GAA).

The protein belongs to the PanD family. Heterooctamer of four alpha and four beta subunits. Pyruvate serves as cofactor. In terms of processing, is synthesized initially as an inactive proenzyme, which is activated by self-cleavage at a specific serine bond to produce a beta-subunit with a hydroxyl group at its C-terminus and an alpha-subunit with a pyruvoyl group at its N-terminus.

The protein localises to the cytoplasm. It carries out the reaction L-aspartate + H(+) = beta-alanine + CO2. It functions in the pathway cofactor biosynthesis; (R)-pantothenate biosynthesis; beta-alanine from L-aspartate: step 1/1. Catalyzes the pyruvoyl-dependent decarboxylation of aspartate to produce beta-alanine. The protein is Aspartate 1-decarboxylase of Agrobacterium fabrum (strain C58 / ATCC 33970) (Agrobacterium tumefaciens (strain C58)).